Consider the following 429-residue polypeptide: Glutamate-1-semialdehyde 2,1-aminomutase 2 (429 aa).

N6-(pyridoxal phosphate)lysine is present on lysine 268.

This sequence belongs to the class-III pyridoxal-phosphate-dependent aminotransferase family. HemL subfamily. Homodimer. Pyridoxal 5'-phosphate is required as a cofactor.

The protein localises to the cytoplasm. The catalysed reaction is (S)-4-amino-5-oxopentanoate = 5-aminolevulinate. Its pathway is porphyrin-containing compound metabolism; protoporphyrin-IX biosynthesis; 5-aminolevulinate from L-glutamyl-tRNA(Glu): step 2/2. This is Glutamate-1-semialdehyde 2,1-aminomutase 2 from Staphylococcus aureus (strain bovine RF122 / ET3-1).